The sequence spans 318 residues: Methenyltetrahydromethanopterin cyclohydrolase (318 aa).

The protein belongs to the MCH family.

It localises to the cytoplasm. It carries out the reaction 5,10-methenyl-5,6,7,8-tetrahydromethanopterin + H2O = N(5)-formyl-5,6,7,8-tetrahydromethanopterin + H(+). Its pathway is one-carbon metabolism; methanogenesis from CO(2); 5,10-methenyl-5,6,7,8-tetrahydromethanopterin from CO(2): step 3/3. Its function is as follows. Catalyzes the reversible interconversion of 5-formyl-H(4)MPT to methenyl-H(4)MPT(+). This chain is Methenyltetrahydromethanopterin cyclohydrolase, found in Methanocella arvoryzae (strain DSM 22066 / NBRC 105507 / MRE50).